Reading from the N-terminus, the 460-residue chain is MAHSRARRRKRASATQLYQTCKAAGTCPSDIIPKVEHNTIADQILKWGSLGVFFGGLGIGTGSGTGGRTGYIPLQSTPRPDIPSVPTARPPILVDTVAPGDPSIVSLVEESAIINSGAPELVPPSHAGFEITTSESTTPAILDVSVTTHTTSTSVFKNPSFADPSVVQSQPAVEAGGHILISTSSISSHPVEEIPLDTFIVSSSDSNPASSTPIPASGARPRIGLYSKALHQVQVTDPAFLSSPQRLITFDNPAYEGEDVTLHFAHNTIHEPPDDAFMDIIRLHRPAIQSRRGRVRFSRIGQRGSMYTRSGKHIGGRIHFYQDISPISAAAEEIELHPLVATAQDSGLFDIYAEPDPDVTEEPVSLSFSTSTPFQRSSVSATPWGNTTVPLSLPADMFVQPGPDIIFPTASTTTPYSPVTPALPTGPVFISGAAFYLYPTWYFARKRRKRVSLFFADVAA.

Residues 1–12 carry the Nuclear localization signal motif; sequence MAHSRARRRKRA. The cysteines at positions 21 and 27 are disulfide-linked. The short motif at 443-451 is the Nuclear localization signal element; that stretch reads FARKRRKRV.

It belongs to the papillomaviridae L2 protein family. Interacts with major capsid protein L1. Interacts with E2; this interaction inhibits E2 transcriptional activity but not the DNA replication function E2. Interacts with host GADD45GIP1. Interacts with host HSPA8; this interaction is required for L2 nuclear translocation. Interacts with host importins KPNB2 and KPNB3. Forms a complex with importin alpha2-beta1 heterodimers via interaction with the importin alpha2 adapter. Interacts with host DYNLT1; this interaction is essential for virus intracellular transport during entry. Interacts (via C-terminus) with host retromer subunits VPS35 and VPS29. Post-translationally, highly phosphorylated.

Its subcellular location is the virion. The protein localises to the host nucleus. It is found in the host early endosome. The protein resides in the host Golgi apparatus. Minor protein of the capsid that localizes along the inner surface of the virion, within the central cavities beneath the L1 pentamers. Plays a role in capsid stabilization through interaction with the major capsid protein L1. Once the virion enters the host cell, L2 escorts the genomic DNA into the nucleus by promoting escape from the endosomal compartments and traffic through the host Golgi network. Mechanistically, the C-terminus of L2 possesses a cell-penetrating peptide that protudes from the host endosome, interacts with host cytoplasmic retromer cargo and thereby mediates the capsid delivery to the host trans-Golgi network. Plays a role through its interaction with host dynein in the intracellular microtubule-dependent transport of viral capsid toward the nucleus. Mediates the viral genome import into the nucleus through binding to host importins. Once within the nucleus, L2 localizes viral genomes to host PML bodies in order to activate early gene expression for establishment of infection. Later on, promotes late gene expression by interacting with the viral E2 protein and by inhibiting its transcriptional activation functions. During virion assembly, encapsidates the genome by direct interaction with the viral DNA. The sequence is that of Minor capsid protein L2 from Human papillomavirus 44.